A 376-amino-acid chain; its full sequence is Alcohol dehydrogenase 1 (376 aa).

Residue S2 is modified to N-acetylserine. Residues C47, H68, C98, C101, C104, C112, and C176 each contribute to the Zn(2+) site. Residues 201–206 (GLGGVG), D225, and K230 each bind NAD(+). N6-succinyllysine is present on K235. An NAD(+)-binding site is contributed by 294 to 296 (VGV). At K341 the chain carries N6-succinyllysine. Position 371 (R371) interacts with NAD(+).

This sequence belongs to the zinc-containing alcohol dehydrogenase family. Class-I subfamily. Dimer of identical or non-identical chains of three types (A, B, C), which are coded by 3 separate genes at different loci. Zn(2+) serves as cofactor.

It is found in the cytoplasm. It catalyses the reaction a primary alcohol + NAD(+) = an aldehyde + NADH + H(+). The enzyme catalyses a secondary alcohol + NAD(+) = a ketone + NADH + H(+). This Rattus norvegicus (Rat) protein is Alcohol dehydrogenase 1 (Adh1).